A 247-amino-acid chain; its full sequence is NAD(P)H-quinone oxidoreductase subunit K (247 aa).

4 residues coordinate [4Fe-4S] cluster: C63, C64, C128, and C159.

This sequence belongs to the complex I 20 kDa subunit family. In terms of assembly, NDH-1 can be composed of about 15 different subunits; different subcomplexes with different compositions have been identified which probably have different functions. [4Fe-4S] cluster serves as cofactor.

It is found in the cellular thylakoid membrane. The enzyme catalyses a plastoquinone + NADH + (n+1) H(+)(in) = a plastoquinol + NAD(+) + n H(+)(out). The catalysed reaction is a plastoquinone + NADPH + (n+1) H(+)(in) = a plastoquinol + NADP(+) + n H(+)(out). Its function is as follows. NDH-1 shuttles electrons from an unknown electron donor, via FMN and iron-sulfur (Fe-S) centers, to quinones in the respiratory and/or the photosynthetic chain. The immediate electron acceptor for the enzyme in this species is believed to be plastoquinone. Couples the redox reaction to proton translocation, and thus conserves the redox energy in a proton gradient. Cyanobacterial NDH-1 also plays a role in inorganic carbon-concentration. The polypeptide is NAD(P)H-quinone oxidoreductase subunit K (Gloeothece citriformis (strain PCC 7424) (Cyanothece sp. (strain PCC 7424))).